The following is a 293-amino-acid chain: Protein PET54 (293 aa).

The protein localises to the mitochondrion inner membrane. In terms of biological role, activator of specific mitochondrial mRNAs. PET54 is involved in the excision of intron aI5-beta from pre-mRNA for cytochrome c oxidase I (COX1) and plays a role in promoting the translation of COX3. This chain is Protein PET54 (PET54), found in Saccharomyces cerevisiae (strain ATCC 204508 / S288c) (Baker's yeast).